Consider the following 166-residue polypeptide: Transcription antitermination protein NusB (166 aa).

Positions 1–18 (MISDESDRFNPRDPKPAD) are enriched in basic and acidic residues. Residues 1–28 (MISDESDRFNPRDPKPADAGKPSKSAKR) are disordered.

The protein belongs to the NusB family.

Its function is as follows. Involved in transcription antitermination. Required for transcription of ribosomal RNA (rRNA) genes. Binds specifically to the boxA antiterminator sequence of the ribosomal RNA (rrn) operons. This Pseudomonas putida (strain GB-1) protein is Transcription antitermination protein NusB.